A 297-amino-acid polypeptide reads, in one-letter code: Probable endonuclease 4 (297 aa).

Zn(2+) is bound by residues His69, His110, Glu145, Asp179, His182, His214, Asp227, His229, and Glu259.

It belongs to the AP endonuclease 2 family. Zn(2+) serves as cofactor.

The enzyme catalyses Endonucleolytic cleavage to 5'-phosphooligonucleotide end-products.. Endonuclease IV plays a role in DNA repair. It cleaves phosphodiester bonds at apurinic or apyrimidinic (AP) sites, generating a 3'-hydroxyl group and a 5'-terminal sugar phosphate. This is Probable endonuclease 4 from Listeria monocytogenes serovar 1/2a (strain ATCC BAA-679 / EGD-e).